The following is a 250-amino-acid chain: Pyrroloquinoline-quinone synthase (250 aa).

The protein belongs to the PqqC family.

It catalyses the reaction 6-(2-amino-2-carboxyethyl)-7,8-dioxo-1,2,3,4,7,8-hexahydroquinoline-2,4-dicarboxylate + 3 O2 = pyrroloquinoline quinone + 2 H2O2 + 2 H2O + H(+). Its pathway is cofactor biosynthesis; pyrroloquinoline quinone biosynthesis. In terms of biological role, ring cyclization and eight-electron oxidation of 3a-(2-amino-2-carboxyethyl)-4,5-dioxo-4,5,6,7,8,9-hexahydroquinoline-7,9-dicarboxylic-acid to PQQ. The polypeptide is Pyrroloquinoline-quinone synthase (Xanthomonas campestris pv. campestris (strain B100)).